The chain runs to 64 residues: Protein sigN173 (64 aa).

This chain is Protein sigN173, found in Dictyostelium discoideum (Social amoeba).